The chain runs to 394 residues: Cysteine protease ATG4B (394 aa).

Catalysis depends on C74, which acts as the Nucleophile. Residues D280 and H282 contribute to the active site. An LIR motif is present at residues 389–392 (FEIL).

Belongs to the peptidase C54 family.

It is found in the cytoplasm. Its subcellular location is the cytosol. The protein localises to the cytoplasmic vesicle. It localises to the autophagosome. The protein resides in the endoplasmic reticulum. It is found in the mitochondrion. The enzyme catalyses [protein]-C-terminal L-amino acid-glycyl-phosphatidylethanolamide + H2O = [protein]-C-terminal L-amino acid-glycine + a 1,2-diacyl-sn-glycero-3-phosphoethanolamine. It catalyses the reaction [protein]-C-terminal L-amino acid-glycyl-phosphatidylserine + H2O = [protein]-C-terminal L-amino acid-glycine + a 1,2-diacyl-sn-glycero-3-phospho-L-serine. Its function is as follows. Cysteine protease that plays a key role in autophagy by mediating both proteolytic activation and delipidation of ATG8 family proteins. Required for canonical autophagy (macroautophagy), non-canonical autophagy as well as for mitophagy. The protease activity is required for proteolytic activation of ATG8 family proteins: cleaves the C-terminal amino acid of ATG8 proteins to reveal a C-terminal glycine. Exposure of the glycine at the C-terminus is essential for ATG8 proteins conjugation to phosphatidylethanolamine (PE) and insertion to membranes, which is necessary for autophagy. Protease activity is also required to counteract formation of high-molecular weight conjugates of ATG8 proteins (ATG8ylation): acts as a deubiquitinating-like enzyme that removes ATG8 conjugated to other proteins, such as ATG3. In addition to the protease activity, also mediates delipidation of ATG8 family proteins. Catalyzes delipidation of PE-conjugated forms of ATG8 proteins during macroautophagy. Also involved in non-canonical autophagy, a parallel pathway involving conjugation of ATG8 proteins to single membranes at endolysosomal compartments, by catalyzing delipidation of ATG8 proteins conjugated to phosphatidylserine (PS). In Danio rerio (Zebrafish), this protein is Cysteine protease ATG4B.